Reading from the N-terminus, the 492-residue chain is Linolenate hydroperoxide lyase, chloroplastic (492 aa).

Positions 1-33 (MLLRTMAATSPRPPPSTSLTSQQPPSPPSQLPL) are disordered. Residues 1-34 (MLLRTMAATSPRPPPSTSLTSQQPPSPPSQLPLR) constitute a chloroplast transit peptide. Heme is bound at residue Cys454.

Belongs to the cytochrome P450 family. Requires heme as cofactor. In terms of tissue distribution, expressed in roots, leaves, flowers and siliques.

Its subcellular location is the plastid. It is found in the chloroplast. Catalyzes the conversion of (9Z,11E,15Z)-(13S)-hydroperoxyoctadeca-9,11,15-trienoate to (9Z)-12-oxo-dodec-9-enoate and cis-3-hexenal. Possesses low activity toward (9Z,11E)-(13S)-13-hydroperoxyoctadeca-9,11-dienoate. Required for the synthesis of the green leaf volatiles (GLVs) hexanal and trans-2-hexenal. This Arabidopsis thaliana (Mouse-ear cress) protein is Linolenate hydroperoxide lyase, chloroplastic.